Consider the following 388-residue polypeptide: Leucine aminopeptidase 1 (388 aa).

Positions 1–19 (MRVLAAIALGATGLRGALA) are cleaved as a signal peptide. The propeptide occupies 20–88 (AVVPQEVLGT…YPTLNSASYV (69 aa)). Residues asparagine 106 and asparagine 180 are each glycosylated (N-linked (GlcNAc...) asparagine). Histidine 188 and aspartate 207 together coordinate Zn(2+). N-linked (GlcNAc...) asparagine glycosylation occurs at asparagine 232. Zn(2+)-binding residues include glutamate 246 and aspartate 273. Cysteine 322 and cysteine 326 are disulfide-bonded. Histidine 355 provides a ligand contact to Zn(2+).

This sequence belongs to the peptidase M28 family. M28E subfamily. Monomer. The cofactor is Zn(2+).

Its subcellular location is the secreted. Extracellular aminopeptidase that allows assimilation of proteinaceous substrates. The sequence is that of Leucine aminopeptidase 1 (lap1) from Aspergillus clavatus (strain ATCC 1007 / CBS 513.65 / DSM 816 / NCTC 3887 / NRRL 1 / QM 1276 / 107).